A 284-amino-acid polypeptide reads, in one-letter code: Shikimate dehydrogenase (NADP(+)) (284 aa).

Residues 19–21 (SFS) and threonine 66 contribute to the shikimate site. The active-site Proton acceptor is lysine 70. Aspartate 82 is an NADP(+) binding site. Asparagine 91 and aspartate 106 together coordinate shikimate. Residues 130 to 134 (GSGGS) and isoleucine 226 each bind NADP(+). Tyrosine 228 is a binding site for shikimate. Position 249 (glycine 249) interacts with NADP(+).

It belongs to the shikimate dehydrogenase family. Homodimer.

It catalyses the reaction shikimate + NADP(+) = 3-dehydroshikimate + NADPH + H(+). It functions in the pathway metabolic intermediate biosynthesis; chorismate biosynthesis; chorismate from D-erythrose 4-phosphate and phosphoenolpyruvate: step 4/7. In terms of biological role, involved in the biosynthesis of the chorismate, which leads to the biosynthesis of aromatic amino acids. Catalyzes the reversible NADPH linked reduction of 3-dehydroshikimate (DHSA) to yield shikimate (SA). This chain is Shikimate dehydrogenase (NADP(+)), found in Methanococcus vannielii (strain ATCC 35089 / DSM 1224 / JCM 13029 / OCM 148 / SB).